The sequence spans 80 residues: Putative membrane protein insertion efficiency factor (80 aa).

The disordered stretch occupies residues 61–80; sequence KTGKDPVPDHFSLKRNQEGE. Basic and acidic residues predominate over residues 62–80; that stretch reads TGKDPVPDHFSLKRNQEGE.

It belongs to the UPF0161 family.

The protein resides in the cell membrane. Could be involved in insertion of integral membrane proteins into the membrane. The polypeptide is Putative membrane protein insertion efficiency factor (Streptococcus pneumoniae serotype 19F (strain G54)).